Consider the following 213-residue polypeptide: Ribonuclease HII (213 aa).

The 206-residue stretch at 1–206 folds into the RNase H type-2 domain; sequence MICGVDEAGK…VSTLLAKKTQ (206 aa). A divalent metal cation-binding residues include Asp6, Glu7, and Asp101.

It belongs to the RNase HII family. Mn(2+) serves as cofactor. The cofactor is Mg(2+).

It localises to the cytoplasm. It catalyses the reaction Endonucleolytic cleavage to 5'-phosphomonoester.. Endonuclease that specifically degrades the RNA of RNA-DNA hybrids. The protein is Ribonuclease HII of Methanoregula boonei (strain DSM 21154 / JCM 14090 / 6A8).